A 93-amino-acid chain; its full sequence is UPF0358 protein BH2626 (93 aa).

It belongs to the UPF0358 family.

In Halalkalibacterium halodurans (strain ATCC BAA-125 / DSM 18197 / FERM 7344 / JCM 9153 / C-125) (Bacillus halodurans), this protein is UPF0358 protein BH2626.